The primary structure comprises 321 residues: Ferrochelatase (321 aa).

Residues His194 and Glu275 each coordinate Fe cation.

The protein belongs to the ferrochelatase family.

It localises to the cytoplasm. The enzyme catalyses heme b + 2 H(+) = protoporphyrin IX + Fe(2+). The protein operates within porphyrin-containing compound metabolism; protoheme biosynthesis; protoheme from protoporphyrin-IX: step 1/1. Its function is as follows. Catalyzes the ferrous insertion into protoporphyrin IX. This is Ferrochelatase from Wigglesworthia glossinidia brevipalpis.